The following is a 246-amino-acid chain: Ribosomal RNA small subunit methyltransferase J (246 aa).

Residues 115–116 (ER) and Asp169 contribute to the S-adenosyl-L-methionine site.

Belongs to the methyltransferase superfamily. RsmJ family.

It localises to the cytoplasm. The enzyme catalyses guanosine(1516) in 16S rRNA + S-adenosyl-L-methionine = N(2)-methylguanosine(1516) in 16S rRNA + S-adenosyl-L-homocysteine + H(+). Functionally, specifically methylates the guanosine in position 1516 of 16S rRNA. In Buchnera aphidicola subsp. Acyrthosiphon pisum (strain 5A), this protein is Ribosomal RNA small subunit methyltransferase J.